A 65-amino-acid polypeptide reads, in one-letter code: Toxin AaHIT4 (65 aa).

In terms of domain architecture, LCN-type CS-alpha/beta spans 1-64 (EHGYLLNKYT…LWNYKTNKCD (64 aa)). Cystine bridges form between C12-C63, C16-C38, C23-C45, and C27-C47.

The protein belongs to the long (4 C-C) scorpion toxin superfamily. Sodium channel inhibitor family. In terms of tissue distribution, expressed by the venom gland.

The protein localises to the secreted. In terms of biological role, has a toxic effect on insects and mammals and is capable of competing with anti-insect scorpion toxins for binding to the sodium channel (Nav) of insects. It also modulates the binding of alpha-type and beta-type anti-mammal scorpion toxins to the mammal sodium channel. It may act on both site 3 and site 4 of voltage-gated sodium channels. The polypeptide is Toxin AaHIT4 (Androctonus australis (Sahara scorpion)).